Consider the following 369-residue polypeptide: Glutamate 5-kinase (369 aa).

Lys9 serves as a coordination point for ATP. 3 residues coordinate substrate: Ser49, Asp136, and Asn148. ATP is bound by residues 168–169 and 210–216; these read TD and TGGMLTK. The PUA domain maps to 275–355; sequence RGGVYVDEGA…KGVFIHRDDW (81 aa).

This sequence belongs to the glutamate 5-kinase family.

The protein localises to the cytoplasm. It carries out the reaction L-glutamate + ATP = L-glutamyl 5-phosphate + ADP. It functions in the pathway amino-acid biosynthesis; L-proline biosynthesis; L-glutamate 5-semialdehyde from L-glutamate: step 1/2. Catalyzes the transfer of a phosphate group to glutamate to form L-glutamate 5-phosphate. The chain is Glutamate 5-kinase from Neisseria meningitidis serogroup A / serotype 4A (strain DSM 15465 / Z2491).